The sequence spans 412 residues: BURP domain-containing protein 13 (412 aa).

The N-terminal stretch at 1–23 is a signal peptide; it reads MARFLLLLVAVAAAAAVLSLGDA. Residues 190 to 406 form the BURP domain; it reads FFHEEAVRVG…PYGHIVWAKN (217 aa). N-linked (GlcNAc...) asparagine glycosylation is present at N369.

In terms of tissue distribution, specifically expressed in anthers, in the tapetum and microspores (at protein level).

Functionally, required for pollen development. Probably synthesized in the tapetum, packaged in Ubisch bodies and transported at appropriate stages to the micropsores. This Oryza sativa subsp. japonica (Rice) protein is BURP domain-containing protein 13 (BURP13).